The following is a 290-amino-acid chain: Outer dense fiber protein 4 (290 aa).

S28 is modified (phosphoserine). The next 4 membrane-spanning stretches (helical) occupy residues 44-64, 125-145, 164-184, and 201-221; these read AQVV…VMVF, PVFG…FVLT, LIGI…LLLF, and IGWS…CGIL. Residues 247–290 are disordered; the sequence is GPESLVSPSQTPSSQENSQESPKDDQKPSSPDKVVSPPQPDTTG. Positions 252–266 are enriched in polar residues; sequence VSPSQTPSSQENSQE.

In terms of tissue distribution, expressed in testis.

Its subcellular location is the membrane. Functionally, component of the outer dense fibers (ODF) of spermatozoa which could be involved in sperm tail structure, sperm movement and general organization of cellular cytoskeleton. In Mus musculus (Mouse), this protein is Outer dense fiber protein 4 (Odf4).